A 205-amino-acid chain; its full sequence is Heat shock protein beta-1 (205 aa).

Arg-12 bears the Omega-N-methylarginine mark. Ser-15 bears the Phosphoserine; by MAPKAPK2 and MAPKAPK3 mark. Phosphoserine is present on residues Ser-26 and Ser-65. The segment at 70-205 (APAYSRALSR…AAKSDETAAK (136 aa)) is interaction with TGFB1I1. A sHSP domain is found at 76–184 (ALSRQLSSGV…QSNEITIPVT (109 aa)). Residues Ser-78 and Ser-82 each carry the phosphoserine; by MAPKAPK2, MAPKAPK3 and MAPKAPK5 modification. A phosphoserine mark is found at Ser-83, Ser-86, and Ser-98. An N6-acetyllysine modification is found at Lys-123. Thr-174 bears the Phosphothreonine mark. Ser-176 and Ser-199 each carry phosphoserine.

The protein belongs to the small heat shock protein (HSP20) family. In terms of assembly, homooligomer. Homodimer; becomes monomeric upon activation. Heterooligomer; with HSPB6. Associates with alpha- and beta-tubulin. Interacts with TGFB1I1. Interacts with CRYAB. Interacts with HSPB8. Interacts with HSPBAP1. Phosphorylated upon exposure to protein kinase C activators and heat shock. Phosphorylation by MAPKAPK2 and MAPKAPK3 in response to stress dissociates HSPB1 from large small heat-shock protein (sHsps) oligomers and impairs its chaperone activity and ability to protect against oxidative stress effectively. Phosphorylation by MAPKAPK5 in response to PKA stimulation induces F-actin rearrangement. In terms of tissue distribution, detected in all tissues tested: skeletal muscle, heart, aorta, large intestine, small intestine, stomach, esophagus, bladder, adrenal gland, thyroid, pancreas, testis, adipose tissue, kidney, liver, spleen, cerebral cortex, blood serum and cerebrospinal fluid. Highest levels are found in the heart and in tissues composed of striated and smooth muscle.

The protein resides in the cytoplasm. It is found in the nucleus. Its subcellular location is the cytoskeleton. The protein localises to the spindle. Functionally, small heat shock protein which functions as a molecular chaperone probably maintaining denatured proteins in a folding-competent state. Plays a role in stress resistance and actin organization. Through its molecular chaperone activity may regulate numerous biological processes including the phosphorylation and the axonal transport of neurofilament proteins. The protein is Heat shock protein beta-1 (HSPB1) of Homo sapiens (Human).